The following is a 197-amino-acid chain: dCTP deaminase, dUMP-forming (197 aa).

Residues 105 to 110 (RSSIGR), Asp123, 131 to 133 (TLE), Gln152, Tyr166, Lys174, and Gln178 each bind dCTP. Glu133 acts as the Proton donor/acceptor in catalysis. Positions 161–183 (PAERPYGHPSRDSKYIGQTRPQT) are disordered. Residues 165-174 (PYGHPSRDSK) show a composition bias toward basic and acidic residues.

The protein belongs to the dCTP deaminase family. Homotrimer.

It carries out the reaction dCTP + 2 H2O = dUMP + NH4(+) + diphosphate. It participates in pyrimidine metabolism; dUMP biosynthesis; dUMP from dCTP: step 1/1. Functionally, bifunctional enzyme that catalyzes both the deamination of dCTP to dUTP and the hydrolysis of dUTP to dUMP without releasing the toxic dUTP intermediate. This Methanothermobacter thermautotrophicus (strain ATCC 29096 / DSM 1053 / JCM 10044 / NBRC 100330 / Delta H) (Methanobacterium thermoautotrophicum) protein is dCTP deaminase, dUMP-forming.